Here is a 305-residue protein sequence, read N- to C-terminus: Sulfate adenylyltransferase subunit 2 1 (305 aa).

The tract at residues 283–305 is disordered; it reads RSGRAIDHDQAGSMERKKREGYF.

It belongs to the PAPS reductase family. CysD subfamily. As to quaternary structure, heterodimer composed of CysD, the smaller subunit, and CysN.

The catalysed reaction is sulfate + ATP + H(+) = adenosine 5'-phosphosulfate + diphosphate. It functions in the pathway sulfur metabolism; hydrogen sulfide biosynthesis; sulfite from sulfate: step 1/3. With CysN forms the ATP sulfurylase (ATPS) that catalyzes the adenylation of sulfate producing adenosine 5'-phosphosulfate (APS) and diphosphate, the first enzymatic step in sulfur assimilation pathway. APS synthesis involves the formation of a high-energy phosphoric-sulfuric acid anhydride bond driven by GTP hydrolysis by CysN coupled to ATP hydrolysis by CysD. The sequence is that of Sulfate adenylyltransferase subunit 2 1 from Chromohalobacter salexigens (strain ATCC BAA-138 / DSM 3043 / CIP 106854 / NCIMB 13768 / 1H11).